Reading from the N-terminus, the 450-residue chain is tRNA modification GTPase MnmE (450 aa).

3 residues coordinate (6S)-5-formyl-5,6,7,8-tetrahydrofolate: Arg20, Glu78, and Lys117. Residues 211-372 (GLRMVIVGKP…LEESIYRETQ (162 aa)) enclose the TrmE-type G domain. Asn221 serves as a coordination point for K(+). GTP contacts are provided by residues 221 to 226 (NVGKST), 240 to 246 (TDIPGTT), 265 to 268 (DTAG), 326 to 329 (NKVD), and 353 to 355 (SAL). Ser225 is a Mg(2+) binding site. Positions 240, 242, and 245 each coordinate K(+). Mg(2+) is bound at residue Thr246. Lys450 contacts (6S)-5-formyl-5,6,7,8-tetrahydrofolate.

It belongs to the TRAFAC class TrmE-Era-EngA-EngB-Septin-like GTPase superfamily. TrmE GTPase family. In terms of assembly, homodimer. Heterotetramer of two MnmE and two MnmG subunits. K(+) is required as a cofactor.

The protein localises to the cytoplasm. Its function is as follows. Exhibits a very high intrinsic GTPase hydrolysis rate. Involved in the addition of a carboxymethylaminomethyl (cmnm) group at the wobble position (U34) of certain tRNAs, forming tRNA-cmnm(5)s(2)U34. This is tRNA modification GTPase MnmE from Thermotoga maritima (strain ATCC 43589 / DSM 3109 / JCM 10099 / NBRC 100826 / MSB8).